Reading from the N-terminus, the 560-residue chain is MFS-type transporter pgmG (560 aa).

The segment at 1-32 (MSETVTQTETDQRPATARSLGAEEKEAKSDEQ) is disordered. Residues 21–31 (GAEEKEAKSDE) show a composition bias toward basic and acidic residues. Transmembrane regions (helical) follow at residues 45-65 (FIVIISILSSVTLYSLDNTIV), 84-104 (WLSVAFLVACVATNSIWSKIY), 111-131 (WLYLFCVVLFEVGSAMCGAAP), 141-161 (ALAGLGGAGLYVGVMTLLSVN), 174-194 (TGLTWGVGTVLGPIVGGGFAV), 201-221 (WSFYINLFFAAVAIPIYLFML), 242-262 (LGTILMIGACVSGVMAINFGG), and 275-295 (CFVVSGVLFIVFGLQQWYCIG). The N-linked (GlcNAc...) asparagine glycan is linked to Asn-300. A helical membrane pass occupies residues 313–333 (FIILFVQTASVATVFFVPIYF). The N-linked (GlcNAc...) asparagine glycan is linked to Asn-343. The next 5 helical transmembrane spans lie at 346 to 366 (AIDAGVRLLPLVCFIVAAMIL), 378 to 398 (MPWYLVGGCLSLVGSVLMYTI), 409 to 429 (GYMIILGVGGGMYAQASFAVA), 440 to 460 (VATGFISLAQLTGGTIALAIA), and 515 to 535 (ISQVYILPITGAAMSISLAIF).

Belongs to the major facilitator superfamily. TCR/Tet family.

It is found in the membrane. Its function is as follows. MFS-type transporter; part of the gene cluster that mediates the biosynthesis of pleosporalin A, ascomycone A, as well as a third cryptic naphthoquinone derived pigment, all responsible for the coloration of conidia. Seems not to be involved in pigment biosynthesis although its expression is regulated by the cluster-specific transcription factor pgmR. The chain is MFS-type transporter pgmG from Aspergillus terreus.